The chain runs to 445 residues: Rab GDP dissociation inhibitor beta (445 aa).

At methionine 1 the chain carries N-acetylmethionine. At lysine 57 the chain carries N6-succinyllysine. Position 61 is a phosphoserine (serine 61). Residue lysine 112 is modified to N6-acetyllysine. Phosphoserine is present on serine 130. N6-acetyllysine is present on lysine 269. At serine 382 the chain carries Phosphoserine.

Belongs to the Rab GDI family. Interacts with RHOH. Interacts with the GDP-bound inactive forms of RAB3A, RAB3B, RAB3C, RAB5A, RAB5B, RAB5C, RAB8A, RAB8B, RAB10, RAB12, RAB35, and RAB43; binds RAB3D to a lesser extent. Interacts with DZIP1; this interaction negatively regulates the interaction of GDI2 with GDP-bound RAB8A. As to expression, ubiquitous.

The protein localises to the cytoplasm. The protein resides in the membrane. Its subcellular location is the golgi apparatus. It is found in the trans-Golgi network. Its function is as follows. GDP-dissociation inhibitor preventing the GDP to GTP exchange of most Rab proteins. By keeping these small GTPases in their inactive GDP-bound form regulates intracellular membrane trafficking. Negatively regulates protein transport to the cilium and ciliogenesis through the inhibition of RAB8A. This chain is Rab GDP dissociation inhibitor beta (GDI2), found in Homo sapiens (Human).